Here is a 206-residue protein sequence, read N- to C-terminus: Protein GrpE (206 aa).

Residues 1–14 (MDKKNEQQEVREEN) show a composition bias toward basic and acidic residues. A disordered region spans residues 1-56 (MDKKNEQQEVREENDTSINQESETQVELEEEVVNEECETSSEKTDEKEVDDENVTD). Positions 24–39 (TQVELEEEVVNEECET) are enriched in acidic residues.

The protein belongs to the GrpE family. In terms of assembly, homodimer.

The protein localises to the cytoplasm. Its function is as follows. Participates actively in the response to hyperosmotic and heat shock by preventing the aggregation of stress-denatured proteins, in association with DnaK and GrpE. It is the nucleotide exchange factor for DnaK and may function as a thermosensor. Unfolded proteins bind initially to DnaJ; upon interaction with the DnaJ-bound protein, DnaK hydrolyzes its bound ATP, resulting in the formation of a stable complex. GrpE releases ADP from DnaK; ATP binding to DnaK triggers the release of the substrate protein, thus completing the reaction cycle. Several rounds of ATP-dependent interactions between DnaJ, DnaK and GrpE are required for fully efficient folding. The sequence is that of Protein GrpE from Clostridioides difficile (strain 630) (Peptoclostridium difficile).